The primary structure comprises 439 residues: MIAKHMIRTLMIETPSVPGNLGRVATAIGLLGGDIGEVETVKVGPNYTMRNITVQVENEEQLQEVIAAVQALGEGIRLHTVSDEVLSAHEGGKIQMKSKMPIRSLAELGRVYTPGVADVCRLIEKEPEKASIYTTISNSVAIVTDGTAILGLGNIGSVAGMPVMEGKAALFDQLAGISGIPILLDTSDPEEIIKTVKHISPGFSGILLEDIGSPHCFEIEDRLKEELNIPVMHDDQHGTAVVTLAAAISACRSAGVDLKEAKVGQIGLGAAGVAICRMFMAYGVNAVYGTDKSESAMNRLEQYGGQAVSSIEELMETCDIVIATTGVPGLIKPAFVRSGQVILALSNPKPEIEPEAALQAGAAYAADGRSVNNVLGFPGIFRGALNAKSTEINHDMLVAAAEAIAACTKQGDVVPQPLDSKVHHAVAAAVEHAALTAVK.

Residues 9 to 84 (TLMIETPSVP…GIRLHTVSDE (76 aa)) enclose the ACT domain. The active-site Proton donor is Tyr112. Lys167 serves as the catalytic Proton acceptor. Residues Glu209, Asp210, and Asp235 each contribute to the a divalent metal cation site. Residues 268 to 271 (LGAA), Asn347, and Asn373 each bind NAD(+).

The protein belongs to the malic enzymes family. Mg(2+) serves as cofactor. Requires Mn(2+) as cofactor.

The enzyme catalyses (S)-malate + NAD(+) = pyruvate + CO2 + NADH. It carries out the reaction oxaloacetate + H(+) = pyruvate + CO2. Its function is as follows. Catalyzes the decarboxylation of malate to pyruvate. Is specific for NAD, cannot use NADP. Can also catalyze the decarboxylation of oxaloacetate. Involved in keeping the ATP levels high. In Bacillus subtilis (strain 168), this protein is NAD-dependent malic enzyme 1.